The following is a 506-amino-acid chain: Aluminum-activated malate transporter 7 (506 aa).

6 helical membrane passes run 28–48 (VGLV…YDSF), 52–72 (AMWA…ATLG), 78–98 (VAAT…ASMS), 104–124 (PILL…VRFF), 130–150 (RYDY…VSGF), and 166–186 (VIIG…VWAG). The segment at 461 to 485 (DDGNNDDTSKNDNGSKEVSIHEKHE) is disordered. Residues 467-485 (DTSKNDNGSKEVSIHEKHE) are compositionally biased toward basic and acidic residues.

This sequence belongs to the aromatic acid exporter (TC 2.A.85) family.

Its subcellular location is the membrane. In terms of biological role, malate transporter. The chain is Aluminum-activated malate transporter 7 (ALMT7) from Arabidopsis thaliana (Mouse-ear cress).